The primary structure comprises 560 residues: Dihydroxy-acid dehydratase (560 aa).

Asp-80 lines the Mg(2+) pocket. Cys-121 serves as a coordination point for [2Fe-2S] cluster. Mg(2+) contacts are provided by Asp-122 and Lys-123. Position 123 is an N6-carboxylysine (Lys-123). Cys-194 is a [2Fe-2S] cluster binding site. Residue Glu-447 participates in Mg(2+) binding. The Proton acceptor role is filled by Ser-473.

It belongs to the IlvD/Edd family. As to quaternary structure, homodimer. It depends on [2Fe-2S] cluster as a cofactor. The cofactor is Mg(2+).

The catalysed reaction is (2R)-2,3-dihydroxy-3-methylbutanoate = 3-methyl-2-oxobutanoate + H2O. The enzyme catalyses (2R,3R)-2,3-dihydroxy-3-methylpentanoate = (S)-3-methyl-2-oxopentanoate + H2O. It functions in the pathway amino-acid biosynthesis; L-isoleucine biosynthesis; L-isoleucine from 2-oxobutanoate: step 3/4. Its pathway is amino-acid biosynthesis; L-valine biosynthesis; L-valine from pyruvate: step 3/4. Functions in the biosynthesis of branched-chain amino acids. Catalyzes the dehydration of (2R,3R)-2,3-dihydroxy-3-methylpentanoate (2,3-dihydroxy-3-methylvalerate) into 2-oxo-3-methylpentanoate (2-oxo-3-methylvalerate) and of (2R)-2,3-dihydroxy-3-methylbutanoate (2,3-dihydroxyisovalerate) into 2-oxo-3-methylbutanoate (2-oxoisovalerate), the penultimate precursor to L-isoleucine and L-valine, respectively. The polypeptide is Dihydroxy-acid dehydratase (Chlorobaculum tepidum (strain ATCC 49652 / DSM 12025 / NBRC 103806 / TLS) (Chlorobium tepidum)).